Consider the following 264-residue polypeptide: S-adenosylmethionine decarboxylase proenzyme (264 aa).

Serine 113 acts as the Schiff-base intermediate with substrate; via pyruvic acid in catalysis. Serine 113 carries the post-translational modification Pyruvic acid (Ser); by autocatalysis. The Proton acceptor; for processing activity role is filled by histidine 118. Cysteine 141 (proton donor; for catalytic activity) is an active-site residue.

It belongs to the prokaryotic AdoMetDC family. Type 2 subfamily. Heterooctamer of four alpha and four beta chains arranged as a tetramer of alpha/beta heterodimers. Pyruvate serves as cofactor. Is synthesized initially as an inactive proenzyme. Formation of the active enzyme involves a self-maturation process in which the active site pyruvoyl group is generated from an internal serine residue via an autocatalytic post-translational modification. Two non-identical subunits are generated from the proenzyme in this reaction, and the pyruvate is formed at the N-terminus of the alpha chain, which is derived from the carboxyl end of the proenzyme. The post-translation cleavage follows an unusual pathway, termed non-hydrolytic serinolysis, in which the side chain hydroxyl group of the serine supplies its oxygen atom to form the C-terminus of the beta chain, while the remainder of the serine residue undergoes an oxidative deamination to produce ammonia and the pyruvoyl group blocking the N-terminus of the alpha chain.

It catalyses the reaction S-adenosyl-L-methionine + H(+) = S-adenosyl 3-(methylsulfanyl)propylamine + CO2. It participates in amine and polyamine biosynthesis; S-adenosylmethioninamine biosynthesis; S-adenosylmethioninamine from S-adenosyl-L-methionine: step 1/1. Functionally, catalyzes the decarboxylation of S-adenosylmethionine to S-adenosylmethioninamine (dcAdoMet), the propylamine donor required for the synthesis of the polyamines spermine and spermidine from the diamine putrescine. This chain is S-adenosylmethionine decarboxylase proenzyme, found in Xylella fastidiosa (strain Temecula1 / ATCC 700964).